A 112-amino-acid polypeptide reads, in one-letter code: U15-hexatoxin-Hi1a (112 aa).

The N-terminal stretch at 1 to 18 (MNTLIAFAVLLLLSTTLG) is a signal peptide. A propeptide spanning residues 19 to 73 (DTDDKVSHEEIQERKELSGISEELLLQQLEAVEAALMEKERLEEMEEDGNSREKR) is cleaved from the precursor. Cystine bridges form between cysteine 74–cysteine 88, cysteine 81–cysteine 93, and cysteine 87–cysteine 107.

This sequence belongs to the neurotoxin 14 (magi-1) family. 08 (Ltx-4) subfamily. Expressed by the venom gland.

It localises to the secreted. In terms of biological role, probable ion channel inhibitor. The polypeptide is U15-hexatoxin-Hi1a (Hadronyche infensa (Fraser island funnel-web spider)).